The primary structure comprises 142 residues: Large ribosomal subunit protein uL13 (142 aa).

The protein belongs to the universal ribosomal protein uL13 family. As to quaternary structure, part of the 50S ribosomal subunit.

In terms of biological role, this protein is one of the early assembly proteins of the 50S ribosomal subunit, although it is not seen to bind rRNA by itself. It is important during the early stages of 50S assembly. The chain is Large ribosomal subunit protein uL13 from Shewanella amazonensis (strain ATCC BAA-1098 / SB2B).